Reading from the N-terminus, the 215-residue chain is GTP-binding nuclear protein Ran (215 aa).

The 165-residue stretch at 6 to 170 (DIPTFKLVLV…LWLVRKLLGD (165 aa)) folds into the Small GTPase Ran-type domain. GTP is bound by residues 17-24 (DGGTGKTT), 35-41 (EKKYVAT), Gly67, 121-124 (NFVD), and 149-151 (SAK). The segment at 36 to 44 (KKYVATLGV) is switch-I. The switch-II stretch occupies residues 67–83 (GQEKFGGLRDGYYIQGQ). Positions 210-215 (DDDEDL) are interaction with RANBP1.

This sequence belongs to the small GTPase superfamily. Ran family. Monomer. Interacts with RANGAP1, which promotes RAN-mediated GTP hydrolysis. Interacts with KPNB1. Interaction with KPNB1 inhibits RANGAP1-mediated stimulation of GTPase activity. Interacts with RCC1 which promotes the exchange of RAN-bound GDP by GTP. Interaction with KPNB1 inhibits RCC1-mediated exchange of RAN-bound GDP by GTP. Interacts (GTP-bound form) with TNPO1; the interaction is direct. Interacts with KPNB1 and with TNPO1; both inhibit RAN GTPase activity. Interacts (via C-terminus) with RANBP1, which alleviates the inhibition of RAN GTPase activity. Interacts with RANGRF, which promotes the release of bound guanine nucleotide. RANGRF and RCC1 compete for an overlapping binding site on RAN. Identified in a complex with KPNA2 and CSE1L; interaction with RANBP1 mediates dissociation of RAN from this complex. Interaction with both RANBP1 and KPNA2 promotes dissociation of the complex between RAN and KPNB1. Identified in a complex composed of RAN, RANGAP1 and RANBP1. Identified in a complex that contains TNPO1, RAN and RANBP1. Identified in a nuclear export complex with XPO1. Interaction with RANBP1 or RANBP2 induces a conformation change in the complex formed by XPO1 and RAN that triggers the release of the nuclear export signal of cargo proteins. Component of a nuclear export receptor complex composed of KPNB1, RAN, SNUPN and XPO1. Requires Mg(2+) as cofactor.

The protein resides in the nucleus. Its subcellular location is the nucleus envelope. It localises to the cytoplasm. It is found in the cytosol. Its function is as follows. GTPase involved in nucleocytoplasmic transport, participating both to the import and the export from the nucleus of proteins and RNAs. Switches between a cytoplasmic GDP- and a nuclear GTP-bound state by nucleotide exchange and GTP hydrolysis. Nuclear import receptors such as importin beta bind their substrates only in the absence of GTP-bound RAN and release them upon direct interaction with GTP-bound RAN, while export receptors behave in the opposite way. Thereby, RAN controls cargo loading and release by transport receptors in the proper compartment and ensures the directionality of the transport. Interaction with RANBP1 induces a conformation change in the complex formed by XPO1 and RAN that triggers the release of the nuclear export signal of cargo proteins. RAN (GTP-bound form) triggers microtubule assembly at mitotic chromosomes and is required for normal mitotic spindle assembly and chromosome segregation. Required for normal progress through mitosis. This Onchocerca volvulus protein is GTP-binding nuclear protein Ran (ran-1).